The following is a 122-amino-acid chain: Vacuolar transporter chaperone complex subunit 1 (122 aa).

Residues methionine 1–threonine 32 lie on the Cytoplasmic side of the membrane. A helical transmembrane segment spans residues phenylalanine 33–phenylalanine 53. The Vacuolar portion of the chain corresponds to glycine 54–lysine 59. The helical transmembrane segment at isoleucine 60–tyrosine 80 threads the bilayer. The Cytoplasmic segment spans residues histidine 81–proline 101. The chain crosses the membrane as a helical span at residues threonine 102–phenylalanine 122.

The protein belongs to the VTC1 family. In terms of assembly, the VTC core complex is an integral membrane heterooligomer composed of at least the catalytic subunit vtc4 and the accessory subunits vtc1 and vtc2. vtc1 is a small membrane protein without hydrophilic domain. Vtc2 and vtc4 are related and have 2 hydrophilic domains that face the cytosol, an N-terminal SPX domain and the central core domain. The central core in vtc4 is the catalytic domain. Vtc1 interacts with GTP-bound Ras-like cdc42, which is subsequently inactivated.

Its subcellular location is the vacuole membrane. Accessory subunit of the vacuolar transporter chaperone (VTC) complex. The VTC complex acts as a vacuolar polyphosphate polymerase that catalyzes the synthesis of inorganic polyphosphate (polyP) via transfer of phosphate from ATP to a growing polyP chain, releasing ADP. VTC exposes its catalytic domain vtc4 to the cytosol, where the growing polyP chain winds through a tunnel-shaped pocket, integrating cytoplasmic polymer synthesis with polyP membrane translocation. The VTC complex carries 9 vacuolar transmembrane domains, which are likely to constitute the translocation channel into the organelle lumen. PolyP synthesis is tightly coupled to its transport into the vacuole lumen, in order to avoid otherwise toxic intermediates in the cytosol, and it depends on the proton gradient across the membrane, formed by V-ATPase. Vtc1 contributes only 3 transmembrane domains to the complex. The VTC complex also plays a role in vacuolar membrane fusion. Involved in the control of cell polarity. The polypeptide is Vacuolar transporter chaperone complex subunit 1 (Schizosaccharomyces pombe (strain 972 / ATCC 24843) (Fission yeast)).